Reading from the N-terminus, the 169-residue chain is Caltractin (169 aa).

Residues 1–24 (MSYRKTVVSARRDQKKGRVGGLTE) are disordered. EF-hand domains are found at residues 25–60 (EQKQ…LGFE), 61–96 (PKKE…KMGE), 98–133 (DSRE…LGEN), and 134–169 (LTDE…TSLF). Positions 38, 40, 42, 44, and 49 each coordinate Ca(2+). Ca(2+) is bound by residues D147, N149, D151, Q153, and E158.

The protein belongs to the centrin family.

Functionally, this calcium-binding protein is found in the basal body complexes (the functional homolog of the centrosome in animal cell). In mitotic cells it is specifically associated with the poles of the mitotic spindles at the sites of the duplicated basal body complexes. In Dunaliella salina (Green alga), this protein is Caltractin.